The sequence spans 204 residues: Recombination protein RecR (204 aa).

The segment at 63-78 (CRRCFNITVGELCAIC) adopts a C4-type zinc-finger fold. The Toprim domain occupies 86–181 (TKICVVEEPL…RVTRPARGLP (96 aa)).

It belongs to the RecR family.

Functionally, may play a role in DNA repair. It seems to be involved in an RecBC-independent recombinational process of DNA repair. It may act with RecF and RecO. This chain is Recombination protein RecR, found in Chloroflexus aurantiacus (strain ATCC 29366 / DSM 635 / J-10-fl).